A 78-amino-acid chain; its full sequence is Putative membrane protein insertion efficiency factor (78 aa).

It belongs to the UPF0161 family.

The protein resides in the cell inner membrane. Could be involved in insertion of integral membrane proteins into the membrane. The protein is Putative membrane protein insertion efficiency factor of Roseobacter denitrificans (strain ATCC 33942 / OCh 114) (Erythrobacter sp. (strain OCh 114)).